Consider the following 238-residue polypeptide: Purine nucleoside phosphorylase DeoD-type (238 aa).

An a purine D-ribonucleoside-binding site is contributed by His4. Residues Gly20, Arg24, Arg43, and 87–90 (RVGT) each bind phosphate. Residues 179-181 (EME) and 203-204 (SN) contribute to the a purine D-ribonucleoside site.

It belongs to the PNP/UDP phosphorylase family. In terms of assembly, homohexamer; trimer of homodimers.

It carries out the reaction a purine D-ribonucleoside + phosphate = a purine nucleobase + alpha-D-ribose 1-phosphate. The enzyme catalyses a purine 2'-deoxy-D-ribonucleoside + phosphate = a purine nucleobase + 2-deoxy-alpha-D-ribose 1-phosphate. Functionally, catalyzes the reversible phosphorolytic breakdown of the N-glycosidic bond in the beta-(deoxy)ribonucleoside molecules, with the formation of the corresponding free purine bases and pentose-1-phosphate. This is Purine nucleoside phosphorylase DeoD-type from Lacticaseibacillus casei (strain BL23) (Lactobacillus casei).